Here is a 471-residue protein sequence, read N- to C-terminus: UDP-N-acetylmuramate--L-alanine ligase (471 aa).

An ATP-binding site is contributed by 114–120; sequence GTHGKTT.

It belongs to the MurCDEF family.

Its subcellular location is the cytoplasm. It catalyses the reaction UDP-N-acetyl-alpha-D-muramate + L-alanine + ATP = UDP-N-acetyl-alpha-D-muramoyl-L-alanine + ADP + phosphate + H(+). It functions in the pathway cell wall biogenesis; peptidoglycan biosynthesis. Its function is as follows. Cell wall formation. The protein is UDP-N-acetylmuramate--L-alanine ligase of Rhizobium meliloti (strain 1021) (Ensifer meliloti).